The sequence spans 207 residues: Venom allergen 5 (207 aa).

4 cysteine pairs are disulfide-bonded: Cys4–Cys16, Cys8–Cys105, Cys29–Cys97, and Cys173–Cys190. An SCP domain is found at 48 to 192; it reads VDEHNRFRQK…MKSHYLVCNY (145 aa).

It belongs to the CRISP family. Venom allergen 5-like subfamily. Monomer. Expressed by the venom gland.

The protein resides in the secreted. This is Venom allergen 5 from Polybia scutellaris rioplatensis (Camoati).